The primary structure comprises 78 residues: Apolipoprotein C-I (78 aa).

The first 26 residues, 1–26 (MRLILWLPVLVVVLLMVLEGPAPAQG), serve as a signal peptide directing secretion.

The protein belongs to the apolipoprotein C1 family.

The protein resides in the secreted. Its function is as follows. Inhibitor of lipoprotein binding to the low density lipoprotein (LDL) receptor, LDL receptor-related protein, and very low density lipoprotein (VLDL) receptor. Associates with high density lipoproteins (HDL) and the triacylglycerol-rich lipoproteins in the plasma and makes up about 10% of the protein of the VLDL and 2% of that of HDL. Appears to interfere directly with fatty acid uptake and is also the major plasma inhibitor of cholesteryl ester transfer protein (CETP). Binds free fatty acids and reduces their intracellular esterification. Modulates the interaction of APOE with beta-migrating VLDL and inhibits binding of beta-VLDL to the LDL receptor-related protein. The sequence is that of Apolipoprotein C-I (APOC1) from Lynx pardinus (Iberian lynx).